Reading from the N-terminus, the 358-residue chain is MSLENAVRVVSTDEKGNQASSTKLIELLHSRVDALTTTNIELTTKLQELLGNLDTVQQRERKLKESAASLRHEGDNVTLMLNRKERKLTEVKEAIVELTTKLGEAKEVNHSLKQKFEDEGLTSEESLRESISEVKTEYDTLVKSHEIYESSNDIQCKSLEDRFSQALLIHGENMKALDGTAEQILANNSELVSQLRATENKAESARTSIRNASIDTAAKVDLEKWLFLYKEAQRICEEFASKTDTKLPDELQAIIDDPVLKELDARFALDEIQYGKTRNKRIPSNPLLSNSQAAARRVASPSANYSPRVSSAQGSLPGITRTPSMKVNNKFSDSNAQEVPTRLHSHGSRSKRSSMVFK.

2 coiled-coil regions span residues 39-118 (NIEL…KFED) and 181-215 (AEQILANNSELVSQLRATENKAESARTSIRNASID). Residues 279–358 (NKRIPSNPLL…RSKRSSMVFK (80 aa)) are disordered. Composition is skewed to polar residues over residues 301–314 (PSANYSPRVSSAQG) and 321–338 (RTPSMKVNNKFSDSNAQE). Positions 343 to 352 (LHSHGSRSKR) are enriched in basic residues.

Belongs to the SHE3 family.

It is found in the endoplasmic reticulum membrane. In terms of biological role, RNA-binding protein that binds specific mRNAs including the ASH1 mRNA, coding for a repressor of the HO endonuclease. Part of the mRNA localization machinery that restricts accumulation of certain proteins to the bud and in the daughter cell. Required for the delivery of cortical endoplasmic reticulum into the emerging bud. The sequence is that of SWI5-dependent HO expression protein 3 (SHE3) from Candida glabrata (strain ATCC 2001 / BCRC 20586 / JCM 3761 / NBRC 0622 / NRRL Y-65 / CBS 138) (Yeast).